We begin with the raw amino-acid sequence, 375 residues long: MSSQGNKYEYGELADKLILAYSKRRLFKAIGTKRDRQQQFSRLDNKDKRFISKLIDVSNSNEKHKIPSELDIALDCIDLAKIYEGVDKREYERESKAKDPNLIYEDFIVLELLHYFKHDFFKWVNKPECSRCKQSSNNIVPTGNSGPPSINPSEISIIENYKCTKCNIAVSFPRYNNPIKLLETKSGRCGEWVNCFIFILRALLGSQSQIRYVWNHEDHVWCEYYSLGLKRWIHLDPCEGVFDEPNLYCENWGKKMSWCFAFGETYIMDVSDKYITKSDKQINKLESVSSLKNIKEFIDTLNDDKLVRYYSNMALTASDENRNLMRLYQEVILIHNSEKFNKENKIEVSRTHNIPTGRQTGDAEWTKSRGEDGNE.

Residues Cys-129, Cys-132, Cys-163, and Cys-166 each contribute to the Zn(2+) site. Cys-189 serves as the catalytic Nucleophile. Active-site residues include His-219 and Asp-236. Glu-239 is a binding site for substrate. The tract at residues 345–375 (KIEVSRTHNIPTGRQTGDAEWTKSRGEDGNE) is disordered. The span at 364–375 (EWTKSRGEDGNE) shows a compositional bias: basic and acidic residues.

This sequence belongs to the transglutaminase-like superfamily. PNGase family. It depends on Zn(2+) as a cofactor.

It is found in the cytoplasm. It carries out the reaction Hydrolysis of an N(4)-(acetyl-beta-D-glucosaminyl)asparagine residue in which the glucosamine residue may be further glycosylated, to yield a (substituted) N-acetyl-beta-D-glucosaminylamine and a peptide containing an aspartate residue.. Specifically deglycosylates the denatured form of N-linked glycoproteins in the cytoplasm and assists their proteasome-mediated degradation. Cleaves the beta-aspartyl-glucosamine (GlcNAc) of the glycan and the amide side chain of Asn, converting Asn to Asp. Prefers proteins containing high-mannose over those bearing complex type oligosaccharides. Can recognize misfolded proteins in the endoplasmic reticulum that are exported to the cytosol to be destroyed and deglycosylate them, while it has no activity toward native proteins. Deglycosylation is a prerequisite for subsequent proteasome-mediated degradation of some, but not all, misfolded glycoproteins. In Debaryomyces hansenii (strain ATCC 36239 / CBS 767 / BCRC 21394 / JCM 1990 / NBRC 0083 / IGC 2968) (Yeast), this protein is Peptide-N(4)-(N-acetyl-beta-glucosaminyl)asparagine amidase (PNG1).